The primary structure comprises 342 residues: UDP-xylose transporter 1 (342 aa).

The next 10 membrane-spanning stretches (helical) occupy residues 7–27 (MQMG…SIVI), 36–56 (LGFP…YCTL), 75–95 (VVLF…SLGF), 100–120 (FYQM…TLFL), 132–152 (LFLL…LNFV), 154–174 (SVLS…TNTI), 184–204 (QLLY…GPFV), 221–241 (IVVG…FSTF), 250–270 (VTYQ…GYTL), and 280–300 (IAGI…CSVA). The disordered stretch occupies residues 305–342 (QASSDSTFLGKDRDTTPLLGQENENHHEAKKLDKHSPV). A compositionally biased stretch (basic and acidic residues) spans 327–342 (NENHHEAKKLDKHSPV).

It belongs to the TPT transporter family. TPT (TC 2.A.7.9) subfamily. In terms of tissue distribution, ubiquitous.

Its subcellular location is the golgi apparatus membrane. The protein localises to the endoplasmic reticulum membrane. In terms of biological role, nucleotide-sugar transporter that transports UDP-xylose and UMP in a strict counter-exchange mode. The sequence is that of UDP-xylose transporter 1 from Arabidopsis thaliana (Mouse-ear cress).